We begin with the raw amino-acid sequence, 384 residues long: A-type ATP synthase subunit C (384 aa).

This sequence belongs to the V-ATPase V0D/AC39 subunit family. As to quaternary structure, has multiple subunits with at least A(3), B(3), C, D, E, F, H, I and proteolipid K(x).

The protein localises to the cell membrane. Its function is as follows. Component of the A-type ATP synthase that produces ATP from ADP in the presence of a proton gradient across the membrane. The polypeptide is A-type ATP synthase subunit C (Methanobrevibacter smithii (strain ATCC 35061 / DSM 861 / OCM 144 / PS)).